A 453-amino-acid chain; its full sequence is DNA repair protein RadA (453 aa).

The segment at Cys-11–Cys-28 adopts a C4-type zinc-finger fold. Residue Gly-93–Ser-100 coordinates ATP. The RadA KNRFG motif motif lies at Lys-250–Gly-254. The lon-protease-like stretch occupies residues Asp-349 to Leu-453.

The protein belongs to the RecA family. RadA subfamily.

Its function is as follows. DNA-dependent ATPase involved in processing of recombination intermediates, plays a role in repairing DNA breaks. Stimulates the branch migration of RecA-mediated strand transfer reactions, allowing the 3' invading strand to extend heteroduplex DNA faster. Binds ssDNA in the presence of ADP but not other nucleotides, has ATPase activity that is stimulated by ssDNA and various branched DNA structures, but inhibited by SSB. Does not have RecA's homology-searching function. This chain is DNA repair protein RadA, found in Chlamydia pneumoniae (Chlamydophila pneumoniae).